The primary structure comprises 93 residues: UPF0728 protein C10orf53 homolog (93 aa).

Belongs to the UPF0728 family.

In Bos taurus (Bovine), this protein is UPF0728 protein C10orf53 homolog.